A 159-amino-acid chain; its full sequence is ATP synthase subunit b (159 aa).

Residues 7-27 (TFVWTIINFLLLLVVLSYFLF) traverse the membrane as a helical segment.

The protein belongs to the ATPase B chain family. F-type ATPases have 2 components, F(1) - the catalytic core - and F(0) - the membrane proton channel. F(1) has five subunits: alpha(3), beta(3), gamma(1), delta(1), epsilon(1). F(0) has three main subunits: a(1), b(2) and c(10-14). The alpha and beta chains form an alternating ring which encloses part of the gamma chain. F(1) is attached to F(0) by a central stalk formed by the gamma and epsilon chains, while a peripheral stalk is formed by the delta and b chains.

Its subcellular location is the cell membrane. Functionally, f(1)F(0) ATP synthase produces ATP from ADP in the presence of a proton or sodium gradient. F-type ATPases consist of two structural domains, F(1) containing the extramembraneous catalytic core and F(0) containing the membrane proton channel, linked together by a central stalk and a peripheral stalk. During catalysis, ATP synthesis in the catalytic domain of F(1) is coupled via a rotary mechanism of the central stalk subunits to proton translocation. Component of the F(0) channel, it forms part of the peripheral stalk, linking F(1) to F(0). In Clostridium novyi (strain NT), this protein is ATP synthase subunit b.